The primary structure comprises 247 residues: Large ribosomal subunit protein uL30 (247 aa).

The protein belongs to the universal ribosomal protein uL30 family.

This Sus scrofa (Pig) protein is Large ribosomal subunit protein uL30 (RPL7L1).